The chain runs to 571 residues: Urease subunit alpha (571 aa).

Residues 133–571 enclose the Urease domain; it reads GGIDTHVHFI…LPLTQRYFLF (439 aa). Ni(2+) contacts are provided by histidine 138, histidine 140, and lysine 221. An N6-carboxylysine modification is found at lysine 221. Histidine 223 lines the substrate pocket. Residues histidine 250 and histidine 276 each coordinate Ni(2+). Histidine 324 acts as the Proton donor in catalysis. Aspartate 364 provides a ligand contact to Ni(2+).

The protein belongs to the metallo-dependent hydrolases superfamily. Urease alpha subunit family. In terms of assembly, heterotrimer of UreA (gamma), UreB (beta) and UreC (alpha) subunits. Three heterotrimers associate to form the active enzyme. The cofactor is Ni cation. Post-translationally, carboxylation allows a single lysine to coordinate two nickel ions.

The protein resides in the cytoplasm. The catalysed reaction is urea + 2 H2O + H(+) = hydrogencarbonate + 2 NH4(+). The protein operates within nitrogen metabolism; urea degradation; CO(2) and NH(3) from urea (urease route): step 1/1. In Staphylococcus aureus (strain bovine RF122 / ET3-1), this protein is Urease subunit alpha.